A 350-amino-acid chain; its full sequence is Secreted effector protein PipB2 (350 aa).

Pentapeptide repeat domains lie at A162–G201, T202–G241, C247–D286, and A287–H326.

Interacts with the host kinesin light chain (KLC), a subunit of the kinesin-1 motor complex.

Its subcellular location is the secreted. It is found in the host membrane. In terms of biological role, effector proteins function to alter host cell physiology and promote bacterial survival in host tissues. Involved in the reorganization of late endosome/lysosome (LE/Lys) compartments in mammalian cells. Necessary and sufficient to link kinesin-1 onto the Salmonella-containing vacuole (SCV) membrane. Required for centrifugal extension of lysosomal glycoprotein-rich membrane tubules, known as Salmonella-induced filaments (Sifs), away from the SCV and toward the cell periphery. Required for virulence, but not for intracellular survival and replication in phagocytic cells. This is Secreted effector protein PipB2 (pipB2) from Salmonella choleraesuis (strain SC-B67).